Reading from the N-terminus, the 103-residue chain is Large ribosomal subunit protein bL21 (103 aa).

The protein belongs to the bacterial ribosomal protein bL21 family. Part of the 50S ribosomal subunit. Contacts protein L20.

This protein binds to 23S rRNA in the presence of protein L20. This is Large ribosomal subunit protein bL21 from Aliivibrio salmonicida (strain LFI1238) (Vibrio salmonicida (strain LFI1238)).